The following is a 247-amino-acid chain: uncharacterized protein (247 aa).

The segment at 225 to 247 (LASAPVPPSGSGNSGHRRANLGL) is disordered.

This is an uncharacterized protein from Methanocaldococcus jannaschii (strain ATCC 43067 / DSM 2661 / JAL-1 / JCM 10045 / NBRC 100440) (Methanococcus jannaschii).